The primary structure comprises 1254 residues: Structural polyprotein (1254 aa).

The segment at 1 to 33 (MFPFQPMYPMQPMPYRNPFAAPRRPWFPRTDPF) is necessary for nucleocapsid assembly and virus assembly. The segment at 33-68 (FLAMQVQELTRSMANLTFKQRRDAPPEGPSAKKPKK) is host transcription inhibition. The short motif at 41 to 48 (LTRSMANL) is the Supraphysiological nuclear export signal element. The interval 45–119 (MANLTFKQRR…KKPGKRQRMV (75 aa)) is disordered. A Nuclear localization signal motif is present at residues 64–68 (KKPKK). A compositionally biased stretch (basic residues) spans 80–92 (GKKKKNQGKKKAK). Residues 91–127 (AKTGPPNPKAQNGNKKKTNKKPGKRQRMVMKLESDKT) form a binding to the viral RNA region. Phosphothreonine occurs at positions 93 and 108. The span at 104–118 (NKKKTNKKPGKRQRM) shows a compositional bias: basic residues. Residues 112-126 (PGKRQRMVMKLESDK) form a ribosome-binding region. Phosphoserine is present on Ser-124. The Peptidase S3 domain occupies 126–275 (KTFPIMLEGK…KYTPENCEQW (150 aa)). At Thr-127 the chain carries Phosphothreonine. Active-site charge relay system residues include His-152, Asp-174, and Ser-226. Positions 276 to 287 (SLVTTMCLLANV) are functions as an uncleaved signal peptide for the precursor of protein E3/E2. The Extracellular portion of the chain corresponds to 276–701 (SLVTTMCLLA…HYYHRYPMST (426 aa)). N-linked (GlcNAc...) asparagine; by host glycans are attached at residues Asn-286, Asn-546, and Asn-652. Residues 702–722 (ILGLSICAAIATVSVAASTWL) traverse the membrane as a helical segment. The Cytoplasmic segment spans residues 723–757 (FCRSRVACLTPYRLTPNARIPFCLAVLCCARTARA). 3 S-palmitoyl cysteine; by host lipidation sites follow: Cys-730, Cys-750, and Cys-751. The Extracellular portion of the chain corresponds to 758-772 (ETTWESLDHLWNNNQ). Residues 773-793 (QMFWIQLLIPLAALIVVTRLL) traverse the membrane as a helical segment. The Cytoplasmic portion of the chain corresponds to 794–795 (RC). The helical transmembrane segment at 796–816 (VCCVVPFLVMAGAAAPAYEHA) threads the bilayer. The Extracellular portion of the chain corresponds to 817–1224 (TTMPSQAGIS…SKTAWTWLTS (408 aa)). 4 cysteine pairs are disulfide-bonded: Cys-861/Cys-926, Cys-874/Cys-906, Cys-875/Cys-908, and Cys-880/Cys-890. The segment at 896 to 913 (VYPFMWGGAYCFCDTENT) is E1 fusion peptide loop. N-linked (GlcNAc...) asparagine; by host glycosylation is present at Asn-946. 4 disulfide bridges follow: Cys-1071–Cys-1083, Cys-1113–Cys-1188, Cys-1118–Cys-1192, and Cys-1140–Cys-1182. A helical membrane pass occupies residues 1225–1245 (LLGGSAVIIIIGLVLATIVAM). Over 1246–1254 (YVLTNQKHN) the chain is Cytoplasmic.

Homodimer. Homomultimer. Interacts with host karyopherin KPNA4; this interaction allows the nuclear import of the viral capsid protein. Interacts with spike glycoprotein E2. Interacts with host IRAK1; the interaction leads to inhibition of IRAK1-dependent signaling. Part of a tetrameric complex composed of host CRM1, host importin alpha/beta dimer and the viral capsid; this complex blocks the receptor-mediated transport through the nuclear pore. Interacts with host phosphatase PPP1CA; this interaction dephosphorylates the capsid protein, which increases its ability to bind to the viral genome. As to quaternary structure, the precursor of protein E3/E2 and E1 form a heterodimer shortly after synthesis. In terms of assembly, interacts with spike glycoprotein E2. The precursor of protein E3/E2 and E1 form a heterodimer shortly after synthesis. Processing of the precursor of protein E3/E2 into E2 and E3 results in a heterodimer of the spike glycoproteins E2 and E1. Spike at virion surface are constituted of three E2-E1 heterodimers. After target cell attachment and endocytosis, E1 change conformation to form homotrimers. Interacts with 6K protein. Interacts (via fusion peptide loop) with host LDLRAD3 (via domain LDL-receptor class A 1); this interaction mediates viral entry to the host cell. 2 adjacent E2-E1 heterodimers in the trimeric spike interact with host LDLRAD3. Interacts with spike glycoprotein E1. Processing of the precursor of protein E3/E2 into E2 and E3 results in a heterodimer of the spike glycoproteins E2 and E1. Spike at virion surface are constituted of a trimer of E2-E1 heterodimers. Interacts with 6K protein. Interacts with host LDLRAD3 (via domain LDL-receptor class A 1); this interaction mediates viral entry to the host cell. 2 adjacent E2-E1 heterodimers in the trimeric spike interact with host LDLRAD3. As to quaternary structure, oligomer. Interacts with spike glycoprotein E1. Interacts with spike glycoprotein E2. Structural polyprotein: Specific enzymatic cleavages in vivo yield mature proteins. Capsid protein is auto-cleaved during polyprotein translation, unmasking a signal peptide at the N-terminus of the precursor of E3/E2. The remaining polyprotein is then targeted to the host endoplasmic reticulum, where host signal peptidase cleaves it into pE2, 6K and E1 proteins. pE2 is further processed to mature E3 and E2 by host furin in trans-Golgi vesicle. In terms of processing, phosphorylated on serine and threonine residues. Post-translationally, palmitoylated via thioester bonds. These palmitoylations may induce disruption of the C-terminus transmembrane. This would result in the reorientation of E2 C-terminus from lumenal to cytoplasmic side. N-glycosylated. In terms of processing, palmitoylated via thioester bonds.

It localises to the virion. The protein localises to the host cytoplasm. It is found in the host cell membrane. Its subcellular location is the host nucleus. The protein resides in the virion membrane. It catalyses the reaction Autocatalytic release of the core protein from the N-terminus of the togavirus structural polyprotein by hydrolysis of a -Trp-|-Ser- bond.. In terms of biological role, forms an icosahedral capsid with a T=4 symmetry composed of 240 copies of the capsid protein surrounded by a lipid membrane through which penetrate 80 spikes composed of trimers of E1-E2 heterodimers. The capsid protein binds to the viral RNA genome at a site adjacent to a ribosome binding site for viral genome translation following genome release. Possesses a protease activity that results in its autocatalytic cleavage from the nascent structural protein. Following its self-cleavage, the capsid protein transiently associates with ribosomes, and within several minutes the protein binds to viral RNA and rapidly assembles into icosahedric core particles. The resulting nucleocapsid eventually associates with the cytoplasmic domain of the spike glycoprotein E2 at the cell membrane, leading to budding and formation of mature virions. In case of infection, new virions attach to target cells and after clathrin-mediated endocytosis their membrane fuses with the host endosomal membrane. This leads to the release of the nucleocapsid into the cytoplasm, followed by an uncoating event necessary for the genomic RNA to become accessible. The uncoating might be triggered by the interaction of capsid proteins with ribosomes. Binding of ribosomes would release the genomic RNA since the same region is genomic RNA-binding and ribosome-binding. Specifically inhibits interleukin-1 receptor-associated kinase 1/IRAK1-dependent signaling during viral entry, representing a means by which the alphaviruses may evade innate immune detection and activation prior to viral gene expression. Inhibits host transcription. Forms a tetrameric complex with XPO1/CRM1 and the nuclear import receptor importin. This complex blocks the central channel of host nuclear pores thereby inhibiting the receptor-mediated nuclear transport and thus the host mRNA and rRNA transcription. The inhibition of transcription is linked to a cytopathic effect on the host cell. Provides the signal sequence for the translocation of the precursor of protein E3/E2 to the host endoplasmic reticulum. Furin-cleaved E3 remains associated with spike glycoprotein E1 and mediates pH protection of the latter during the transport via the secretory pathway. After virion release from the host cell, the assembly protein E3 is gradually released in the extracellular space. Functionally, plays a role in viral attachment to target host cell, by binding to the cell receptor LDLRAD3. Synthesized as a p62 precursor which is processed by furin at the cell membrane just before virion budding, giving rise to E2-E1 heterodimer. The p62-E1 heterodimer is stable, whereas E2-E1 is unstable and dissociate at low pH. p62 is processed at the last step, presumably to avoid E1 fusion activation before its final export to cell surface. E2 C-terminus contains a transitory transmembrane that would be disrupted by palmitoylation, resulting in reorientation of the C-terminal tail from lumenal to cytoplasmic side. This step is critical since E2 C-terminus is involved in budding by interacting with capsid proteins. This release of E2 C-terminus in cytoplasm occurs lately in protein export, and precludes premature assembly of particles at the endoplasmic reticulum membrane. Its function is as follows. Acts as a viroporin that participates in virus glycoprotein processing and transport to the plasma membrane, cell permeabilization and budding of viral particles. Disrupts the calcium homeostasis of the cell, probably at the endoplasmic reticulum level. This leads to cytoplasmic calcium elevation. Because of its lipophilic properties, the 6K protein is postulated to influence the selection of lipids that interact with the transmembrane domains of the glycoproteins, which, in turn, affects the deformability of the bilayer required for the extreme curvature that occurs as budding proceeds. Present in low amount in virions, about 3% compared to viral glycoproteins. In terms of biological role, class II viral fusion protein. Fusion activity is inactive as long as E1 is bound to E2 in mature virion. After virus attachment to cell receptor LDLRAD3 and endocytosis, acidification of the endosome induce dissociation of E1/E2 heterodimer and concomitant trimerization of the E1 subunits. This E1 trimer is fusion active, and promotes release of viral nucleocapsid in cytoplasm after endosome and viral membrane fusion. Efficient fusion requires the presence of cholesterol and sphingolipid in the target membrane. The chain is Structural polyprotein from Bos taurus (Bovine).